The sequence spans 247 residues: Transmembrane protein 33 (247 aa).

A2 is modified (N-acetylalanine). Residues 2 to 31 (ADTTPNGPQGAGAVQFMMTNKLDTAMWLSR) are Lumenal-facing. The chain crosses the membrane as a helical span at residues 32–52 (LFTVYCSALFVLPLLGLHEAA). Topologically, residues 53 to 100 (SFYQRALLANALTSALRLHQRLPHFQLSRAFLAQALLEDSCHYLLYSL) are cytoplasmic. A helical membrane pass occupies residues 101-121 (IFVNSYPVTMSIFPVLLFSLL). The Lumenal segment spans residues 122 to 155 (HAATYTKKVLDAKGSNSLPLLRSFLDKLSTNQQN). Residues 156–176 (ILKFIACNEIFLMPATVFMLF) form a helical membrane-spanning segment. The Cytoplasmic segment spans residues 177 to 247 (SGQGSLLQPF…FISRLAPTVA (71 aa)).

Belongs to the PER33/POM33 family. Interacts with EIF2AK3. Interacts with RTN1, RTN2, RTN3, RTN4 and ARL6IP1. Interacts with RNF5. Interacts with RNF26. Interacts with PKD2.

The protein localises to the endoplasmic reticulum membrane. It localises to the melanosome. Its subcellular location is the nucleus envelope. Functionally, acts as a regulator of the tubular endoplasmic reticulum (ER) network by modulating intracellular calcium homeostasis. Mechanistically, stimulates PKD2 calcium-dependent activity. Suppresses the RTN3/4-induced formation of the ER tubules. Positively regulates PERK-mediated and IRE1-mediated unfolded protein response signaling. Plays an essential role in VEGF-mediated release of Ca(2+) from ER stores during angiogenesis. Also plays a role in the modulation of innate immune signaling through the cGAS-STING pathway by interacting with RNF26. Participates in lipid metabolism by acting as a downstream effector of the pyruvate kinase/PKM. Forms a complex with RNF5 to facilitate polyubiquitination and subsequent degradation of SCAP on the ER membrane. The protein is Transmembrane protein 33 (Tmem33) of Mus musculus (Mouse).